Reading from the N-terminus, the 179-residue chain is Large ribosomal subunit protein uL6 (179 aa).

This sequence belongs to the universal ribosomal protein uL6 family. In terms of assembly, part of the 50S ribosomal subunit.

Functionally, this protein binds to the 23S rRNA, and is important in its secondary structure. It is located near the subunit interface in the base of the L7/L12 stalk, and near the tRNA binding site of the peptidyltransferase center. The chain is Large ribosomal subunit protein uL6 from Mycoplasmopsis pulmonis (strain UAB CTIP) (Mycoplasma pulmonis).